The sequence spans 692 residues: Epithelial sodium channel subunit alpha (692 aa).

A disordered region spans residues 1-67; the sequence is MSSIKGNKLE…PAAPQQPTAE (67 aa). Topologically, residues 1 to 108 are cytoplasmic; that stretch reads MSSIKGNKLE…CSQHNRMKTA (108 aa). A compositionally biased stretch (low complexity) spans 56-65; sequence PEPAAPQQPT. Residues 109 to 129 traverse the membrane as a helical segment; it reads FWAVLWLCTFGMMYWQFGLLF. At 130–585 the chain is on the extracellular side; it reads GEYFSYPVSL…SQWSLWFGSS (456 aa). 10 disulfide bridges follow: Cys156/Cys328, Cys252/Cys259, Cys305/Cys312, Cys417/Cys502, Cys439/Cys479, Cys439/Cys498, Cys443/Cys494, Cys452/Cys479, Cys452/Cys502, and Cys454/Cys468. A gating release of inhibition by proteolysis (GRIP); protease-sensitive region that is responsible for the proteolytic activation of the channel region spans residues 198 to 266; it reads RSRRDLRGTL…SDCFYQTYSS (69 aa). A helical transmembrane segment spans residues 586-606; the sequence is VLSVVEMAELIFDLLVITFLM. The Cytoplasmic portion of the chain corresponds to 607-692; it reads LLRRFRSRYW…GSSACPLGGP (86 aa). Residues 627–692 are disordered; it reads EVASTLASSP…GSSACPLGGP (66 aa). A compositionally biased stretch (polar residues) spans 628–637; it reads VASTLASSPP. Residues 653–666 are compositionally biased toward pro residues; that stretch reads GPAPSPALTAPPPA. A PY motif; recruits WW domain-containing proteins and is thereby required for ubiquitination and inhibition of the channel by NEDD4 and NEDD4L motif is present at residues 663-667; it reads PPPAY. Residues 682-692 are compositionally biased toward low complexity; that stretch reads AGSSACPLGGP.

This sequence belongs to the amiloride-sensitive sodium channel (TC 1.A.6) family. SCNN1A subfamily. Heterotrimer; containing an alpha/SCNN1A, a beta/SCNN1B and a gamma/SCNN1G subunit. Interacts with WWP1 (via WW domains). Interacts with WWP2 (via WW domains); inhibits the channel. Interacts with BPIFA1; the interaction is indirect via SCNN1B and inhibits the proteolytic processing of SCNN1A and SCNN1G and the activation of ENaC. Interacts with the full-length immature form of PCSK9 (pro-PCSK9). In terms of processing, ubiquitinated. Can be ubiquitinated at multiple sites and undergo monoubiquitination and polyubiquitination. Ubiquitination by NEDD4 or NEDD4L inhibits the ENaC channel through endocytosis, intracellular retention and degradation of its individual subunits. Post-translationally, N-glycosylated. ENaC is activated through the proteolytic maturation of its subunits. Furin cleaves the SCNN1A subunit, which results in a stepwise increase in the open probability of the channel due to the release of an inhibitory tract. BPIFA1, which is recruited by the SCNN1B subunit, prevents the proteolytic activation of ENaC.

The protein resides in the apical cell membrane. It is found in the cell projection. The protein localises to the cilium. Its subcellular location is the cytoplasmic granule. It localises to the cytoplasm. The protein resides in the cytoplasmic vesicle. It is found in the secretory vesicle. The protein localises to the acrosome. Its subcellular location is the flagellum. It catalyses the reaction Na(+)(in) = Na(+)(out). Originally identified and characterized by its inhibition by the diuretic drug amiloride. Its function is as follows. This is one of the three pore-forming subunits of the heterotrimeric epithelial sodium channel (ENaC), a critical regulator of sodium balance and fluid homeostasis. ENaC operates in epithelial tissues, where it mediates the electrodiffusion of sodium ions from extracellular fluid through the apical membrane of cells, with water following osmotically. It plays a key role in maintaining sodium homeostasis through electrogenic sodium reabsorption in the kidneys. Additionally, ENaC is essential for airway surface liquid homeostasis, which is crucial for proper mucus clearance. The protein is Epithelial sodium channel subunit alpha of Pan troglodytes (Chimpanzee).